The sequence spans 256 residues: uncharacterized protein (256 aa).

The first 22 residues, 1-22, serve as a signal peptide directing secretion; the sequence is MKSIKRIGLCISLLILSIFVTS. C23 is lipidated: N-palmitoyl cysteine. A lipid anchor (S-diacylglycerol cysteine) is attached at C23.

Belongs to the staphylococcal tandem lipoprotein family.

Its subcellular location is the cell membrane. This is an uncharacterized protein from Staphylococcus aureus (strain USA300).